Here is a 101-residue protein sequence, read N- to C-terminus: NADH-quinone oxidoreductase subunit K (101 aa).

Helical transmembrane passes span leucine 4 to leucine 24, isoleucine 30 to phenylalanine 50, and isoleucine 61 to leucine 81.

It belongs to the complex I subunit 4L family. NDH-1 is composed of 14 different subunits. Subunits NuoA, H, J, K, L, M, N constitute the membrane sector of the complex.

The protein resides in the cell inner membrane. The enzyme catalyses a quinone + NADH + 5 H(+)(in) = a quinol + NAD(+) + 4 H(+)(out). Functionally, NDH-1 shuttles electrons from NADH, via FMN and iron-sulfur (Fe-S) centers, to quinones in the respiratory chain. The immediate electron acceptor for the enzyme in this species is believed to be ubiquinone. Couples the redox reaction to proton translocation (for every two electrons transferred, four hydrogen ions are translocated across the cytoplasmic membrane), and thus conserves the redox energy in a proton gradient. The chain is NADH-quinone oxidoreductase subunit K from Laribacter hongkongensis (strain HLHK9).